The primary structure comprises 421 residues: UDP-N-acetylglucosamine 1-carboxyvinyltransferase (421 aa).

22 to 23 (KN) contacts phosphoenolpyruvate. Arg93 contributes to the UDP-N-acetyl-alpha-D-glucosamine binding site. Residue Cys117 is the Proton donor of the active site. A 2-(S-cysteinyl)pyruvic acid O-phosphothioketal modification is found at Cys117. UDP-N-acetyl-alpha-D-glucosamine is bound by residues 122–126 (RPVDL), Asp308, and Val330.

It belongs to the EPSP synthase family. MurA subfamily.

It localises to the cytoplasm. The catalysed reaction is phosphoenolpyruvate + UDP-N-acetyl-alpha-D-glucosamine = UDP-N-acetyl-3-O-(1-carboxyvinyl)-alpha-D-glucosamine + phosphate. It participates in cell wall biogenesis; peptidoglycan biosynthesis. Its function is as follows. Cell wall formation. Adds enolpyruvyl to UDP-N-acetylglucosamine. This Pseudomonas paraeruginosa (strain DSM 24068 / PA7) (Pseudomonas aeruginosa (strain PA7)) protein is UDP-N-acetylglucosamine 1-carboxyvinyltransferase.